A 156-amino-acid chain; its full sequence is MPRKGPAPKRPVMVDPVYGSPLVSQLVSKILLDGKKTVAQNIVYTALEGCRAKNNTDPVQTLKRALDNIKPSLEVKSRRVGGATYQVPVEVKPARQTTLAMRWLVNFSRERREKTMAERLMNEILDASNGLGASVKRREDTHKMAEANRAFAHYRW.

The protein belongs to the universal ribosomal protein uS7 family. As to quaternary structure, part of the 30S ribosomal subunit. Contacts proteins S9 and S11.

In terms of biological role, one of the primary rRNA binding proteins, it binds directly to 16S rRNA where it nucleates assembly of the head domain of the 30S subunit. Is located at the subunit interface close to the decoding center, probably blocks exit of the E-site tRNA. The polypeptide is Small ribosomal subunit protein uS7 (Cutibacterium acnes (strain DSM 16379 / KPA171202) (Propionibacterium acnes)).